Reading from the N-terminus, the 611-residue chain is Histone acetyltransferase KAT7 (611 aa).

Residues 1–173 (MPRRKRNAGS…SDLSHRPKRR (173 aa)) are disordered. The residue at position 10 (Ser-10) is a Phosphoserine. Low complexity predominate over residues 42-57 (VTRSSARLSQSSQDSS). Residues Ser-50 and Ser-53 each carry the phosphoserine; by ATR modification. Residue Ser-57 is modified to Phosphoserine; by PLK1. Ser-64 carries the post-translational modification Phosphoserine. Phosphothreonine; by CDK1 is present on residues Thr-85 and Thr-88. Residues 96-105 (QTRSSGSETE) show a composition bias toward polar residues. Ser-102 is modified (phosphoserine). Thr-104 carries the phosphothreonine modification. Residues 110-125 (FSDRETKNTADHDESP) show a composition bias toward basic and acidic residues. Phosphoserine occurs at positions 111 and 124. Thr-128 carries the phosphothreonine modification. The segment covering 134–145 (PSSESDIDISSP) has biased composition (low complexity). Residues 148–168 (SHDESIAKDMSLKDSGSDLSH) are compositionally biased toward basic and acidic residues. Phosphoserine is present on residues Ser-158, Ser-162, Ser-164, and Ser-178. Residues 176–219 (HESYNFNMKCPTPGCNSLGHLTGKHERHFSISGCPLYHNLSADE) form a CCHHC-type zinc finger. Lys-199 and Lys-277 each carry N6-acetyllysine. Lys-323 participates in a covalent cross-link: Glycyl lysine isopeptide (Lys-Gly) (interchain with G-Cter in SUMO2). One can recognise an MYST-type HAT domain in the interval 332-607 (EGSNMIKTIA…MDPSCLKWTP (276 aa)). A Glycyl lysine isopeptide (Lys-Gly) (interchain with G-Cter in ubiquitin) cross-link involves residue Lys-338. Residues 365 to 390 (LYMCEFCLKYMKSQTILRRHMAKCVW) form a C2HC MYST-type zinc finger. Residues Cys-368, Cys-371, His-384, and Cys-388 each contribute to the Zn(2+) site. N6-acetyllysine; by autocatalysis is present on Lys-432. Acetyl-CoA contacts are provided by residues 475–477 (ILT) and 483–488 (RQGYGK). Ser-506 bears the Phosphoserine mark. Catalysis depends on Glu-508, which acts as the Proton donor/acceptor. Acetyl-CoA-binding residues include Ser-512 and Ser-521.

It belongs to the MYST (SAS/MOZ) family. As to quaternary structure, component of the HBO1 complex composed of KAT7/HBO1, MEAF6, ING4 or ING5, and one scaffold subunit: complexes containing BRPF scaffold (BRPF1, BRD1/BRPF2 or BRPF3) direct KAT7/HBO1 specificity towards H3K14ac, while complexes containing JADE scaffold (JADE1, JADE2 and JADE3) mediate acetylation of histone H4. Interacts with MCM2 and ORC1. Interacts with the androgen receptor (AR); in the presence of dihydrotestosterone. Interacts with CDT1. Interacts with MAP2K1 and CUL1. Interacts with p53/TP53; leading to inhibit histone acetyltransferase activity. Interacts with MIS18BP1. Phosphorylated at Ser-50 and Ser-53 by ATR in response to DNA damage, promoting its ubiquitination by the CRL4(DDB2) complex and subsequent degradation. Phosphorylation at Ser-50 and Ser-53 by ATR in response to ultraviolet-induced DNA, promotes localization to DNA damage sites. Phosphorylation at Ser-57 by PLK1 during mitosis seems important for prereplicative complex formation and DNA replication licensing, and requires prior phosphorylation at Thr-85 and Thr-88 by CDK1. Phosphorylated by MAP2K1, which accelerates its degradation. In terms of processing, ubiquitinated at Lys-338, leading to proteasomal degradation. Ubiquitinated by the CRL4(DDB2) complex following phosphorylation by ATR, leading to its subsequent degradation. Post-translationally, autoacetylation at Lys-432 is required for proper function. In terms of tissue distribution, ubiquitously expressed, with highest levels in testis.

The protein localises to the nucleus. It localises to the chromosome. Its subcellular location is the centromere. It is found in the cytoplasm. The protein resides in the cytosol. It carries out the reaction L-lysyl-[histone] + acetyl-CoA = N(6)-acetyl-L-lysyl-[histone] + CoA + H(+). Histone acetyltransferase activity is inhibited by GMNN in the context of a complex with CDT1, inhibiting histone H4 acetylation and DNA replication licensing. Selectively inhibited by WM-3835 (N'-(4-fluoro-5-methyl-[1,1'-biphenyl]-3-carbonyl)-3- hydroxybenzenesulfonohydrazide) inhibitor. Its function is as follows. Catalytic subunit of histone acetyltransferase HBO1 complexes, which specifically mediate acetylation of histone H3 at 'Lys-14' (H3K14ac), thereby regulating various processes, such as gene transcription, protein ubiquitination, immune regulation, stem cell pluripotent and self-renewal maintenance and embryonic development. Some complexes also catalyze acetylation of histone H4 at 'Lys-5', 'Lys-8' and 'Lys-12' (H4K5ac, H4K8ac and H4K12ac, respectively), regulating DNA replication initiation, regulating DNA replication initiation. Specificity of the HBO1 complexes is determined by the scaffold subunit: complexes containing BRPF scaffold (BRPF1, BRD1/BRPF2 or BRPF3) direct KAT7/HBO1 specificity towards H3K14ac, while complexes containing JADE (JADE1, JADE2 and JADE3) scaffold direct KAT7/HBO1 specificity towards histone H4. H3K14ac promotes transcriptional elongation by facilitating the processivity of RNA polymerase II. Acts as a key regulator of hematopoiesis by forming a complex with BRD1/BRPF2, directing KAT7/HBO1 specificity towards H3K14ac and promoting erythroid differentiation. H3K14ac is also required for T-cell development. KAT7/HBO1-mediated acetylation facilitates two consecutive steps, licensing and activation, in DNA replication initiation: H3K14ac facilitates the activation of replication origins, and histone H4 acetylation (H4K5ac, H4K8ac and H4K12ac) facilitates chromatin loading of MCM complexes, promoting DNA replication licensing. Acts as a positive regulator of centromeric CENPA assembly: recruited to centromeres and mediates histone acetylation, thereby preventing centromere inactivation mediated by SUV39H1, possibly by increasing histone turnover/exchange. Involved in nucleotide excision repair: phosphorylation by ATR in response to ultraviolet irradiation promotes its localization to DNA damage sites, where it mediates histone acetylation to facilitate recruitment of XPC at the damaged DNA sites. Acts as an inhibitor of NF-kappa-B independently of its histone acetyltransferase activity. In terms of biological role, plays a central role in the maintenance of leukemia stem cells in acute myeloid leukemia (AML). Acts by mediating acetylation of histone H3 at 'Lys-14' (H3K14ac), thereby facilitating the processivity of RNA polymerase II to maintain the high expression of key genes, such as HOXA9 and HOXA10 that help to sustain the functional properties of leukemia stem cells. This chain is Histone acetyltransferase KAT7, found in Homo sapiens (Human).